Reading from the N-terminus, the 215-residue chain is Intraflagellar transport protein 43 homolog B (215 aa).

Residues Met1–Ile107 form a disordered region.

The protein belongs to the IFT43 family. As to quaternary structure, component of IFT complex A.

Functionally, component of IFT complex A (IFT-A) involved in retrograde ciliary transport along microtubules from the ciliary tip to the base. The sequence is that of Intraflagellar transport protein 43 homolog B (ift43b) from Salmo salar (Atlantic salmon).